The sequence spans 352 residues: Potassium/proton antiporter CemA (352 aa).

The next 3 membrane-spanning stretches (helical) occupy residues 52-72 (VLVSLQCLLTLIIIPLFIHFF), 227-247 (IAALTNLFADLLTLFSLIILF), and 312-332 (IILLFVATFPVLLDSVIKYWI).

It belongs to the CemA family.

Its subcellular location is the plastid. The protein resides in the chloroplast inner membrane. It carries out the reaction K(+)(in) + H(+)(out) = K(+)(out) + H(+)(in). Functionally, contributes to K(+)/H(+) antiport activity by supporting proton efflux to control proton extrusion and homeostasis in chloroplasts in a light-dependent manner to modulate photosynthesis. Prevents excessive induction of non-photochemical quenching (NPQ) under continuous-light conditions. Indirectly promotes efficient inorganic carbon uptake into chloroplasts. The polypeptide is Potassium/proton antiporter CemA (Oltmannsiellopsis viridis (Marine flagellate)).